A 278-amino-acid polypeptide reads, in one-letter code: MLCLTRLRANVNKVAFMEMVKDLRFRTEAPIAECGAALKETHGDVEKAMEVLRKKGAARAMKKRSRVTEHGSVVACVGGLFGAAVITVCSETDFAARSAQFQNTCARVKDALQRKIIDSKGDVLTNPMEAHRSLVEATAEDIRSSIAVLGENVTIKSVESLRLAPHVAEHISIGSYTHGSLDVPDVGRIAGVVAVSRLDPTREVQASTLTDVARHFVASSGAEGNYAHQNFFGTEETVGQWLKHHGLCFSSSLVVDFGKEPITHTASQPRNAVKHPEG.

Belongs to the EF-Ts family.

Its subcellular location is the mitochondrion. Its function is as follows. Associates with the EF-Tu.GDP complex and induces the exchange of GDP to GTP. It remains bound to the aminoacyl-tRNA.EF-Tu.GTP complex up to the GTP hydrolysis stage on the ribosome. This chain is Elongation factor Ts 2, mitochondrial, found in Trypanosoma cruzi (strain CL Brener).